The chain runs to 72 residues: Translation initiation factor IF-1 (72 aa).

An S1-like domain is found at 1–72; that stretch reads MAKEDNIEMQ…SKGRIVFRSR (72 aa).

It belongs to the IF-1 family. Component of the 30S ribosomal translation pre-initiation complex which assembles on the 30S ribosome in the order IF-2 and IF-3, IF-1 and N-formylmethionyl-tRNA(fMet); mRNA recruitment can occur at any time during PIC assembly.

It localises to the cytoplasm. In terms of biological role, one of the essential components for the initiation of protein synthesis. Stabilizes the binding of IF-2 and IF-3 on the 30S subunit to which N-formylmethionyl-tRNA(fMet) subsequently binds. Helps modulate mRNA selection, yielding the 30S pre-initiation complex (PIC). Upon addition of the 50S ribosomal subunit IF-1, IF-2 and IF-3 are released leaving the mature 70S translation initiation complex. The chain is Translation initiation factor IF-1 from Sodalis glossinidius (strain morsitans).